The primary structure comprises 576 residues: Arginine--tRNA ligase (576 aa).

The 'HIGH' region signature appears at 132 to 142 (ANPTGPMHIGH).

Belongs to the class-I aminoacyl-tRNA synthetase family. In terms of assembly, monomer.

It is found in the cytoplasm. The enzyme catalyses tRNA(Arg) + L-arginine + ATP = L-arginyl-tRNA(Arg) + AMP + diphosphate. The sequence is that of Arginine--tRNA ligase from Ehrlichia ruminantium (strain Welgevonden).